We begin with the raw amino-acid sequence, 877 residues long: Phosphoenolpyruvate carboxylase (877 aa).

Catalysis depends on residues histidine 138 and lysine 543.

The protein belongs to the PEPCase type 1 family. Mg(2+) is required as a cofactor.

The enzyme catalyses oxaloacetate + phosphate = phosphoenolpyruvate + hydrogencarbonate. Functionally, forms oxaloacetate, a four-carbon dicarboxylic acid source for the tricarboxylic acid cycle. This chain is Phosphoenolpyruvate carboxylase, found in Aeromonas hydrophila subsp. hydrophila (strain ATCC 7966 / DSM 30187 / BCRC 13018 / CCUG 14551 / JCM 1027 / KCTC 2358 / NCIMB 9240 / NCTC 8049).